Reading from the N-terminus, the 373-residue chain is Peptide chain release factor 1-like, mitochondrial (373 aa).

Residues 1–13 (MRSGFLRSARRLW) constitute a mitochondrion transit peptide. Residues 56–111 (QLAAAARLLNEKERELRDTESLLHDENEDLKKLAESEIALCQKEIAELKHRIISLL) adopt a coiled-coil conformation. Residues 229–293 (PKDLRIDTKR…LRARLYSMRL (65 aa)) form a GGQ domain region. The GGQ motif lies at 243-245 (GGQ). At glutamine 245 the chain carries N5-methylglutamine.

This sequence belongs to the prokaryotic/mitochondrial release factor family. Post-translationally, methylation of glutamine in the GGQ triplet by HEMK1 is conserved from bacteria to mammals.

It localises to the mitochondrion. Functionally, mitochondrial peptide chain release factor that directs the termination of translation in response to the peptide chain termination codons UAA and UAG. This Rattus norvegicus (Rat) protein is Peptide chain release factor 1-like, mitochondrial (Mtrf1l).